The chain runs to 362 residues: Protein mab-21-like 3 (362 aa).

The protein belongs to the mab-21 family.

The protein is Protein mab-21-like 3 (MAB21L3) of Homo sapiens (Human).